We begin with the raw amino-acid sequence, 671 residues long: tRNA(Met) cytidine acetyltransferase TmcA (671 aa).

ATP-binding positions include Gln-180, Gly-202 to Gln-211, and Arg-319. Positions Ile-349–Leu-531 constitute an N-acetyltransferase domain. Residues Ile-461–Val-463, Gln-468–Gln-474, Glu-499, and Arg-506 each bind acetyl-CoA.

It belongs to the RNA cytidine acetyltransferase family. TmcA subfamily.

It localises to the cytoplasm. It carries out the reaction cytidine(34) in elongator tRNA(Met) + acetyl-CoA + ATP + H2O = N(4)-acetylcytidine(34) in elongator tRNA(Met) + ADP + phosphate + CoA + H(+). Functionally, catalyzes the formation of N(4)-acetylcytidine (ac(4)C) at the wobble position of tRNA(Met), by using acetyl-CoA as an acetyl donor and ATP (or GTP). This is tRNA(Met) cytidine acetyltransferase TmcA from Citrobacter koseri (strain ATCC BAA-895 / CDC 4225-83 / SGSC4696).